Consider the following 592-residue polypeptide: Arginine--tRNA ligase (592 aa).

Residues 112 to 122 carry the 'HIGH' region motif; sequence VNPNKELHVGH.

This sequence belongs to the class-I aminoacyl-tRNA synthetase family. Monomer.

The protein localises to the cytoplasm. It carries out the reaction tRNA(Arg) + L-arginine + ATP = L-arginyl-tRNA(Arg) + AMP + diphosphate. This Thermus thermophilus (strain ATCC 27634 / DSM 579 / HB8) protein is Arginine--tRNA ligase.